Consider the following 86-residue polypeptide: Defensin-like SRCA-homolog protein (86 aa).

Residues 1–26 (MRCVVLFMVSCLLIVLLINHFEEVEA) form the signal peptide. 4 disulfide bridges follow: Cys-32–Cys-84, Cys-42–Cys-70, Cys-52–Cys-79, and Cys-68–Cys-81.

It belongs to the DEFL family.

Its subcellular location is the secreted. In terms of biological role, involved in male-mediated self-incompatibility. The protein is Defensin-like SRCA-homolog protein (SCR37) of Arabidopsis lyrata (Lyre-leaved rock-cress).